The primary structure comprises 179 residues: UPF0227 protein Swoo_1808 (179 aa).

It belongs to the UPF0227 family.

The sequence is that of UPF0227 protein Swoo_1808 from Shewanella woodyi (strain ATCC 51908 / MS32).